The primary structure comprises 198 residues: Holliday junction branch migration complex subunit RuvA (198 aa).

Residues 1–64 form a domain I region; it reads MIAHLRGTLL…EDAIALFGFL (64 aa). Residues 65-141 are domain II; that stretch reads DREEKRLFER…LDDLIAAAPA (77 aa). Residues 141–145 are flexible linker; the sequence is AAGPV. The tract at residues 146 to 198 is domain III; sequence AAGPAAEDVLSALLNLGYQRPAALKAIETAVEKDAAAGEDFDLLFRAALKLIR.

Belongs to the RuvA family. Homotetramer. Forms an RuvA(8)-RuvB(12)-Holliday junction (HJ) complex. HJ DNA is sandwiched between 2 RuvA tetramers; dsDNA enters through RuvA and exits via RuvB. An RuvB hexamer assembles on each DNA strand where it exits the tetramer. Each RuvB hexamer is contacted by two RuvA subunits (via domain III) on 2 adjacent RuvB subunits; this complex drives branch migration. In the full resolvosome a probable DNA-RuvA(4)-RuvB(12)-RuvC(2) complex forms which resolves the HJ.

The protein resides in the cytoplasm. Its function is as follows. The RuvA-RuvB-RuvC complex processes Holliday junction (HJ) DNA during genetic recombination and DNA repair, while the RuvA-RuvB complex plays an important role in the rescue of blocked DNA replication forks via replication fork reversal (RFR). RuvA specifically binds to HJ cruciform DNA, conferring on it an open structure. The RuvB hexamer acts as an ATP-dependent pump, pulling dsDNA into and through the RuvAB complex. HJ branch migration allows RuvC to scan DNA until it finds its consensus sequence, where it cleaves and resolves the cruciform DNA. The polypeptide is Holliday junction branch migration complex subunit RuvA (Acidobacterium capsulatum (strain ATCC 51196 / DSM 11244 / BCRC 80197 / JCM 7670 / NBRC 15755 / NCIMB 13165 / 161)).